A 190-amino-acid polypeptide reads, in one-letter code: Potassium-transporting ATPase KdpC subunit (190 aa).

Residues 13–33 (VGFLLLTLVCGVIYPGVVTII) traverse the membrane as a helical segment.

The protein belongs to the KdpC family. The system is composed of three essential subunits: KdpA, KdpB and KdpC.

The protein resides in the cell membrane. In terms of biological role, part of the high-affinity ATP-driven potassium transport (or Kdp) system, which catalyzes the hydrolysis of ATP coupled with the electrogenic transport of potassium into the cytoplasm. This subunit acts as a catalytic chaperone that increases the ATP-binding affinity of the ATP-hydrolyzing subunit KdpB by the formation of a transient KdpB/KdpC/ATP ternary complex. The sequence is that of Potassium-transporting ATPase KdpC subunit from Listeria innocua serovar 6a (strain ATCC BAA-680 / CLIP 11262).